Here is a 585-residue protein sequence, read N- to C-terminus: Arginine--tRNA ligase (585 aa).

The short motif at 131–141 (ANPTGPMHVGH) is the 'HIGH' region element.

This sequence belongs to the class-I aminoacyl-tRNA synthetase family. Monomer.

It localises to the cytoplasm. It carries out the reaction tRNA(Arg) + L-arginine + ATP = L-arginyl-tRNA(Arg) + AMP + diphosphate. The polypeptide is Arginine--tRNA ligase (Bartonella tribocorum (strain CIP 105476 / IBS 506)).